We begin with the raw amino-acid sequence, 168 residues long: Leghemoglobin 5 (168 aa).

The Globin domain maps to 3–163 (AFTEKQEALV…IAAAIKKAMA (161 aa)). Residue S63 coordinates heme b. A Phosphoserine modification is found at S63. Residue H79 coordinates O2. K82, H110, and K113 together coordinate heme b. The residue at position 151 (Y151) is a Nitrated tyrosine.

This sequence belongs to the plant globin family. As to quaternary structure, monomer. In terms of processing, nitrated in effective nodules and particularly in hypoxic conditions; this mechanism may play a protective role in the symbiosis by buffering toxic peroxynitrite NO(2)(-). Nitration level decrease during nodule senescence. Phosphorylation at Ser-63 disrupts the molecular environment of its porphyrin ring oxygen binding pocket, thus leading to a reduced oxygen consumption and to the delivery of oxygen O(2) to symbiosomes. As to expression, expressed in root nodules and flowers.

Its subcellular location is the cytoplasm. It is found in the cytosol. The protein resides in the nucleus. In terms of biological role, leghemoglobin that reversibly binds oxygen O(2) through a pentacoordinated heme iron. In root nodules, facilitates the diffusion of oxygen to the bacteroids while preventing the bacterial nitrogenase from being inactivated by buffering dioxygen, nitric oxide and carbon monoxide, and promoting the formation of reactive oxygen species (ROS, e.g. H(2)O(2)). This role is essential for symbiotic nitrogen fixation (SNF). Maybe involved in water stress tolerance. The sequence is that of Leghemoglobin 5 from Glycine max (Soybean).